We begin with the raw amino-acid sequence, 79 residues long: MAFLKKSLFLVLFLGIVSLSICEEEKREGEEEEKQEEENEELSEEELRERRALLDKLKSLGKVVGKVAIGVAQHYLNPQ.

An N-terminal signal peptide occupies residues 1–22 (MAFLKKSLFLVLFLGIVSLSIC). A propeptide spanning residues 23-49 (EEEKREGEEEEKQEEENEELSEEELRE) is cleaved from the precursor. Residues 27-46 (REGEEEEKQEEENEELSEEE) are disordered. Residues 30-44 (EEEEKQEEENEELSE) are compositionally biased toward acidic residues.

It belongs to the frog skin active peptide (FSAP) family. Dermaseptin subfamily. As to expression, expressed by the skin glands.

It localises to the secreted. Its function is as follows. Has antibacterial activity. The protein is Raniseptin-9 of Boana raniceps (Chaco tree frog).